The primary structure comprises 88 residues: Small ribosomal subunit protein uS15 (88 aa).

This sequence belongs to the universal ribosomal protein uS15 family. In terms of assembly, part of the 30S ribosomal subunit. Forms a bridge to the 50S subunit in the 70S ribosome, contacting the 23S rRNA.

One of the primary rRNA binding proteins, it binds directly to 16S rRNA where it helps nucleate assembly of the platform of the 30S subunit by binding and bridging several RNA helices of the 16S rRNA. Its function is as follows. Forms an intersubunit bridge (bridge B4) with the 23S rRNA of the 50S subunit in the ribosome. This chain is Small ribosomal subunit protein uS15, found in Trichlorobacter lovleyi (strain ATCC BAA-1151 / DSM 17278 / SZ) (Geobacter lovleyi).